Consider the following 531-residue polypeptide: CTP synthase (531 aa).

The tract at residues 1–267 (MTKYIFVTGG…DQIVCEHLRL (267 aa)) is amidoligase domain. Serine 13 is a CTP binding site. UTP is bound at residue serine 13. 14-19 (SLGKGI) contacts ATP. Tyrosine 54 lines the L-glutamine pocket. ATP is bound at residue aspartate 71. Mg(2+)-binding residues include aspartate 71 and glutamate 141. Residues 148 to 150 (DIE), 188 to 193 (KTKPTQ), and lysine 224 each bind CTP. UTP-binding positions include 188-193 (KTKPTQ) and lysine 224. An ATP-binding site is contributed by 240 to 242 (RDA). The Glutamine amidotransferase type-1 domain occupies 292-531 (KIALVGKYVE…REFVRASLKE (240 aa)). Glycine 354 lines the L-glutamine pocket. Residue cysteine 381 is the Nucleophile; for glutamine hydrolysis of the active site. L-glutamine contacts are provided by residues 382–385 (LGMQ), glutamate 405, and arginine 462. Active-site residues include histidine 507 and glutamate 509.

The protein belongs to the CTP synthase family. In terms of assembly, homotetramer.

The enzyme catalyses UTP + L-glutamine + ATP + H2O = CTP + L-glutamate + ADP + phosphate + 2 H(+). It carries out the reaction L-glutamine + H2O = L-glutamate + NH4(+). It catalyses the reaction UTP + NH4(+) + ATP = CTP + ADP + phosphate + 2 H(+). It participates in pyrimidine metabolism; CTP biosynthesis via de novo pathway; CTP from UDP: step 2/2. Its activity is regulated as follows. Allosterically activated by GTP, when glutamine is the substrate; GTP has no effect on the reaction when ammonia is the substrate. The allosteric effector GTP functions by stabilizing the protein conformation that binds the tetrahedral intermediate(s) formed during glutamine hydrolysis. Inhibited by the product CTP, via allosteric rather than competitive inhibition. In terms of biological role, catalyzes the ATP-dependent amination of UTP to CTP with either L-glutamine or ammonia as the source of nitrogen. Regulates intracellular CTP levels through interactions with the four ribonucleotide triphosphates. This chain is CTP synthase, found in Geobacillus kaustophilus (strain HTA426).